The chain runs to 362 residues: Acetylglutamate kinase (362 aa).

The segment covering 1 to 11 (MNAPTRTPPPS) has biased composition (pro residues). Positions 1 to 42 (MNAPTRTPPPSNGGHGSTGSTGSTGDAAPGGGTGRGPAATAR) are disordered. Substrate contacts are provided by residues 106–107 (GG), arginine 128, and asparagine 227. The segment at 329 to 362 (MAESGTSPEPGTPPAPAARPAGIVPAGEPTGGTP) is disordered. Low complexity predominate over residues 346–355 (ARPAGIVPAG).

Belongs to the acetylglutamate kinase family. ArgB subfamily.

The protein resides in the cytoplasm. The catalysed reaction is N-acetyl-L-glutamate + ATP = N-acetyl-L-glutamyl 5-phosphate + ADP. It functions in the pathway amino-acid biosynthesis; L-arginine biosynthesis; N(2)-acetyl-L-ornithine from L-glutamate: step 2/4. Its function is as follows. Catalyzes the ATP-dependent phosphorylation of N-acetyl-L-glutamate. The protein is Acetylglutamate kinase of Frankia casuarinae (strain DSM 45818 / CECT 9043 / HFP020203 / CcI3).